A 267-amino-acid polypeptide reads, in one-letter code: Alkaline ceramidase 3 (267 aa).

At M1–E33 the chain is on the cytoplasmic side. Ca(2+) is bound by residues D19, W20, E22, N24, and E33. A helical membrane pass occupies residues F34–I55. The Lumenal portion of the chain corresponds to R56–K61. A helical transmembrane segment spans residues R62 to M82. H81 contributes to the Zn(2+) binding site. Topologically, residues T83–E87 are cytoplasmic. The helical transmembrane segment at M88–F108 threads the bilayer. Topologically, residues E109–N118 are lumenal. A helical transmembrane segment spans residues Y119–V139. The Cytoplasmic segment spans residues K140–E141. A helical membrane pass occupies residues P142–Y162. The Lumenal segment spans residues I163 to G173. Residues L174–I194 form a helical membrane-spanning segment. Topologically, residues F195 to Q215 are cytoplasmic. Residues F216 to L236 traverse the membrane as a helical segment. Zn(2+) contacts are provided by H217 and H221. Residues Y237–H267 are Lumenal-facing.

It belongs to the alkaline ceramidase family. The cofactor is Zn(2+). Up-regulated with age in cerebeLlum and cerebrum.

The protein resides in the endoplasmic reticulum membrane. It is found in the golgi apparatus membrane. It catalyses the reaction an N-acyl-(4R)-4-hydroxysphinganine + H2O = (4R)-hydroxysphinganine + a fatty acid. The enzyme catalyses N-(5Z,8Z,11Z,14Z-eicosatetraenoyl)-sphing-4-enine + H2O = sphing-4-enine + (5Z,8Z,11Z,14Z)-eicosatetraenoate. The catalysed reaction is N-(5Z,8Z,11Z,14Z-eicosatetraenoyl)-sphinganine + H2O = sphinganine + (5Z,8Z,11Z,14Z)-eicosatetraenoate. It carries out the reaction N-(5Z,8Z,11Z,14Z-eicosatetraenoyl)-(4R)-hydroxysphinganine + H2O = (4R)-hydroxysphinganine + (5Z,8Z,11Z,14Z)-eicosatetraenoate. It catalyses the reaction N-(11Z-eicosenoyl)-sphing-4-enine + H2O = (11Z)-eicosenoate + sphing-4-enine. The enzyme catalyses N-(11Z-eicosenoyl)-sphinganine + H2O = (11Z)-eicosenoate + sphinganine. The catalysed reaction is N-(11Z-eicosenoyl)-(4R)-hydroxysphinganine + H2O = (11Z)-eicosenoate + (4R)-hydroxysphinganine. It carries out the reaction N-(9Z-octadecenoyl)-sphing-4-enine + H2O = sphing-4-enine + (9Z)-octadecenoate. It catalyses the reaction N-(9Z-octadecenoyl)-sphinganine + H2O = sphinganine + (9Z)-octadecenoate. The enzyme catalyses N-(9Z-octadecenoyl)-(4R)-hydroxysphinganine + H2O = (4R)-hydroxysphinganine + (9Z)-octadecenoate. The catalysed reaction is an N-acylsphing-4-enine + H2O = sphing-4-enine + a fatty acid. It carries out the reaction an N-acylsphinganine + H2O = sphinganine + a fatty acid. Its pathway is lipid metabolism; sphingolipid metabolism. Activated by Ca(2+) and inhibited by Zn(2+). Its function is as follows. Endoplasmic reticulum and Golgi ceramidase that catalyzes the hydrolysis of unsaturated long-chain C18:1-, C20:1- and C20:4-ceramides, dihydroceramides and phytoceramides into sphingoid bases like sphingosine and free fatty acids at alkaline pH. Ceramides, sphingosine, and its phosphorylated form sphingosine-1-phosphate are bioactive lipids that mediate cellular signaling pathways regulating several biological processes including cell proliferation, apoptosis and differentiation. Controls the generation of sphingosine in erythrocytes, and thereby sphingosine-1-phosphate in plasma. Through the regulation of ceramides and sphingosine-1-phosphate homeostasis in the brain may play a role in neurons survival and function. By regulating the levels of pro-inflammatory ceramides in immune cells and tissues, may modulate the inflammatory response. The protein is Alkaline ceramidase 3 (Acer3) of Mus musculus (Mouse).